The chain runs to 286 residues: General stress protein A (286 aa).

UDP-binding positions include 12–17 and 111–112; these read CADDNY and DC. Mn(2+) is bound by residues Asp111, Asp113, and His247. Position 247–253 (247–253) interacts with UDP; the sequence is HFCGGEK.

This sequence belongs to the glycosyltransferase 8 family.

This is General stress protein A (gspA) from Bacillus subtilis (strain 168).